Consider the following 826-residue polypeptide: BLOC-2 complex member HPS5 homolog (826 aa).

WD repeat units lie at residues 22–61, 63–102, and 110–149; these read KHHNRIKYTCFDISDSYIIFGASSGSLYLFNRNGKFLLLI, NKHGAITSLSISANSKYVAFATQRSLICVYAVNLSAQATP, and DQSVQVTCIHWTQDEKQFYYGDSRGQVSLVLLSSFIGHSL. Over residues 422 to 446 the composition is skewed to polar residues; sequence ALDTHSSGGSSATTERSLSGGSSSR. The interval 422–447 is disordered; that stretch reads ALDTHSSGGSSATTERSLSGGSSSRA.

The protein belongs to the HPS5 family. Expressed in eye pigment granules.

Functionally, has a role in the biogenesis of eye pigment granules. Eye pigment granules are specialized forms of late endosomes or lysosomes. Biogenesis of pigment granules in the eye requires molecular components required for protein delivery to lysosomes. This is BLOC-2 complex member HPS5 homolog from Drosophila melanogaster (Fruit fly).